A 1030-amino-acid polypeptide reads, in one-letter code: Peroxisomal ATPase PEX6 (1030 aa).

Positions 478–683 (VLLHSTTNNV…VETARMTATA (206 aa)) are AAA-cassette D1. The tract at residues 767-956 (GILFYGPPGT…CSDAMLNAMS (190 aa)) is AAA-cassette D2. Position 772 to 779 (772 to 779 (GPPGTGKT)) interacts with ATP.

Belongs to the AAA ATPase family. Interacts with PEX1; forming the PEX1-PEX6 AAA ATPase complex, which is composed of a heterohexamer formed by a trimer of PEX1-PEX6 dimers. Interacts with PEX15; anchors PEX1-PEX6 heterooligomers to the peroxisomal membrane and mediates their association with the peroxisomal importomer. Interacts with UBP15.

The protein localises to the cytoplasm. It is found in the cytosol. The protein resides in the peroxisome membrane. It catalyses the reaction ATP + H2O = ADP + phosphate + H(+). In terms of biological role, component of the PEX1-PEX6 AAA ATPase complex, a protein dislocase complex that mediates the ATP-dependent extraction of the PEX5 receptor from peroxisomal membranes, an essential step for PEX5 recycling. Specifically recognizes PEX5 monoubiquitinated at 'Cys-6', and pulls it out of the peroxisome lumen through the PEX2-PEX10-PEX12 retrotranslocation channel. Extraction by the PEX1-PEX6 AAA ATPase complex is accompanied by unfolding of the TPR repeats and release of bound cargo from PEX5. The protein is Peroxisomal ATPase PEX6 of Saccharomyces cerevisiae (strain ATCC 204508 / S288c) (Baker's yeast).